A 220-amino-acid chain; its full sequence is Zinc-finger homeodomain protein 2 (220 aa).

Positions 1-11 (MNFEDQEEDME) are enriched in acidic residues. The segment at 1-40 (MNFEDQEEDMEMSGVNPPCGYDSLSGEGATSSGGGGVGRS) is disordered. Residues 31 to 40 (SSGGGGVGRS) are compositionally biased toward gly residues. The ZF-HD dimerization-type zinc-finger motif lies at 49–98 (YRECLKNHAVNIGGHAVDGCCEFMPSGEDGTLDALKCAACGCHRNFHRKE). The segment at 100–160 (ESIGGRAHRV…SSSGGTTKRF (61 aa)) is disordered. Residues 157–220 (TKRFRTKFTA…NNKNSLGKKP (64 aa)) constitute a DNA-binding region (homeobox; atypical).

Homo or heterodimer. Interacts with ZHD1, ZHD3, ZHD4, ZHD5, ZHD6, ZHD7, ZHD8, ZHD9, ZHD10 and ZHD11. In terms of tissue distribution, mostly expressed in flowers and, to a lower extent, in inflorescence, stems and leaves.

Its subcellular location is the nucleus. Essential protein. Putative transcription factor. The sequence is that of Zinc-finger homeodomain protein 2 (ZHD1) from Arabidopsis thaliana (Mouse-ear cress).